The following is a 74-amino-acid chain: Conotoxin Bu4 (74 aa).

Residues 1 to 22 (MKLTCVVIVAVLLLTACQLIIA) form the signal peptide. A propeptide spanning residues 23-45 (EDSRGTQLHRALRKATKLSVSTR) is cleaved from the precursor. Cystine bridges form between Cys47-Cys63, Cys54-Cys66, and Cys62-Cys73.

It belongs to the conotoxin O1 superfamily. Expressed by the venom duct.

The protein resides in the secreted. This chain is Conotoxin Bu4, found in Conus bullatus (Bubble cone).